The following is a 164-amino-acid chain: UPF0114 protein YqhA (164 aa).

Helical transmembrane passes span 15–35 (LLAP…LKFF), 53–73 (LILV…LVMV), and 136–156 (LMWY…MGYL).

This sequence belongs to the UPF0114 family.

It localises to the cell membrane. In Shigella dysenteriae serotype 1 (strain Sd197), this protein is UPF0114 protein YqhA.